The following is a 373-amino-acid chain: MAGDVNNEVNSKKRQGDTLAKERLLGLAEKIYNQFEEEVIPSVSLPSRTKANIEYSDESDVWVYGDRESERSAKTVKGAFQLLKTTYATDFLINEHLAHNRGSTLRELYYISEGWDYAKFKEQAESDRLIEDLELLTSLQREYFHMRPEEDGATMFGPIEISELTKRGARNIHCQKDVGEGGYQIPFNVENIEFKNHDASMIIAIETGGMYARLMENGFDEAYNAILVHLKGQPARSTRRIIKRMNEELEIPVAVFTDGDPWSYRIYASVAYGAIKSAHLSEFMATPAARFLGLQPSDIVEYELSTDKLTEQDISALRSELSDPRFESEYWKEQIQLQLDIGKKAEQQAFAGKGLDFVTEVYLPNRLKELGMV.

The Topo IIA-type catalytic domain occupies 15 to 153; the sequence is QGDTLAKERL…FHMRPEEDGA (139 aa). Residue tyrosine 110 is the O-(5'-phospho-DNA)-tyrosine intermediate of the active site. Mg(2+) contacts are provided by glutamate 206 and aspartate 258.

Belongs to the TOP6A family. Homodimer. Heterotetramer of two Top6A and two Top6B chains. Mg(2+) serves as cofactor.

The catalysed reaction is ATP-dependent breakage, passage and rejoining of double-stranded DNA.. Relaxes both positive and negative superturns and exhibits a strong decatenase activity. This is Type 2 DNA topoisomerase 6 subunit A from Methanosarcina acetivorans (strain ATCC 35395 / DSM 2834 / JCM 12185 / C2A).